The sequence spans 321 residues: tRNA U34 carboxymethyltransferase (321 aa).

Carboxy-S-adenosyl-L-methionine-binding positions include Lys90, Trp104, Lys109, Gly129, 151–153 (DPT), 180–181 (IE), Met195, Tyr199, and Arg314.

It belongs to the class I-like SAM-binding methyltransferase superfamily. CmoB family. In terms of assembly, homotetramer.

The enzyme catalyses carboxy-S-adenosyl-L-methionine + 5-hydroxyuridine(34) in tRNA = 5-carboxymethoxyuridine(34) in tRNA + S-adenosyl-L-homocysteine + H(+). In terms of biological role, catalyzes carboxymethyl transfer from carboxy-S-adenosyl-L-methionine (Cx-SAM) to 5-hydroxyuridine (ho5U) to form 5-carboxymethoxyuridine (cmo5U) at position 34 in tRNAs. This chain is tRNA U34 carboxymethyltransferase, found in Mannheimia succiniciproducens (strain KCTC 0769BP / MBEL55E).